A 274-amino-acid polypeptide reads, in one-letter code: 3-methyl-2-oxobutanoate hydroxymethyltransferase (274 aa).

Residues Asp44 and Asp83 each contribute to the Mg(2+) site. 3-methyl-2-oxobutanoate is bound by residues 44–45, Asp83, and Lys113; that span reads DS. Glu115 contributes to the Mg(2+) binding site. Glu182 functions as the Proton acceptor in the catalytic mechanism.

It belongs to the PanB family. In terms of assembly, homodecamer; pentamer of dimers. Requires Mg(2+) as cofactor.

The protein localises to the cytoplasm. It catalyses the reaction 3-methyl-2-oxobutanoate + (6R)-5,10-methylene-5,6,7,8-tetrahydrofolate + H2O = 2-dehydropantoate + (6S)-5,6,7,8-tetrahydrofolate. It participates in cofactor biosynthesis; (R)-pantothenate biosynthesis; (R)-pantoate from 3-methyl-2-oxobutanoate: step 1/2. In terms of biological role, catalyzes the reversible reaction in which hydroxymethyl group from 5,10-methylenetetrahydrofolate is transferred onto alpha-ketoisovalerate to form ketopantoate. The protein is 3-methyl-2-oxobutanoate hydroxymethyltransferase of Campylobacter jejuni subsp. doylei (strain ATCC BAA-1458 / RM4099 / 269.97).